A 344-amino-acid polypeptide reads, in one-letter code: Phenylalanine--tRNA ligase alpha subunit (344 aa).

Glu-256 is a binding site for Mg(2+).

This sequence belongs to the class-II aminoacyl-tRNA synthetase family. Phe-tRNA synthetase alpha subunit type 1 subfamily. Tetramer of two alpha and two beta subunits. The cofactor is Mg(2+).

It is found in the cytoplasm. The catalysed reaction is tRNA(Phe) + L-phenylalanine + ATP = L-phenylalanyl-tRNA(Phe) + AMP + diphosphate + H(+). This Shouchella clausii (strain KSM-K16) (Alkalihalobacillus clausii) protein is Phenylalanine--tRNA ligase alpha subunit.